Consider the following 244-residue polypeptide: uncharacterized protein (244 aa).

Residues Val7–Phe74 form the HTH gntR-type domain. The segment at residues Arg34–Val53 is a DNA-binding region (H-T-H motif).

This is an uncharacterized protein from Mycobacterium tuberculosis (strain CDC 1551 / Oshkosh).